We begin with the raw amino-acid sequence, 395 residues long: Peptide-N(4)-(N-acetyl-beta-glucosaminyl)asparagine amidase (395 aa).

The Zn(2+) site is built by C131, C134, C172, and C175. C198 (nucleophile) is an active-site residue. Residues H232 and D249 contribute to the active site. E252 serves as a coordination point for substrate. The disordered stretch occupies residues P363–S395. Residues T366–W385 show a composition bias toward polar residues. Residues T386–S395 show a composition bias toward basic and acidic residues.

The protein belongs to the transglutaminase-like superfamily. PNGase family. Zn(2+) is required as a cofactor.

It is found in the cytoplasm. It catalyses the reaction Hydrolysis of an N(4)-(acetyl-beta-D-glucosaminyl)asparagine residue in which the glucosamine residue may be further glycosylated, to yield a (substituted) N-acetyl-beta-D-glucosaminylamine and a peptide containing an aspartate residue.. In terms of biological role, specifically deglycosylates the denatured form of N-linked glycoproteins in the cytoplasm and assists their proteasome-mediated degradation. Cleaves the beta-aspartyl-glucosamine (GlcNAc) of the glycan and the amide side chain of Asn, converting Asn to Asp. Prefers proteins containing high-mannose over those bearing complex type oligosaccharides. Can recognize misfolded proteins in the endoplasmic reticulum that are exported to the cytosol to be destroyed and deglycosylate them, while it has no activity toward native proteins. Deglycosylation is a prerequisite for subsequent proteasome-mediated degradation of some, but not all, misfolded glycoproteins. This Candida albicans (strain SC5314 / ATCC MYA-2876) (Yeast) protein is Peptide-N(4)-(N-acetyl-beta-glucosaminyl)asparagine amidase (PNG1).